The primary structure comprises 344 residues: Protein-glutamate methylesterase/protein-glutamine glutaminase (344 aa).

The 118-residue stretch at 7 to 124 folds into the Response regulatory domain; it reads RVLVVDDSAF…SLTFRQVAPE (118 aa). Position 58 is a 4-aspartylphosphate (aspartate 58). Residues 154-344 form the CheB-type methylesterase domain; that stretch reads PAVSGKIVVI…KIPEKLIELV (191 aa). Catalysis depends on residues serine 166, histidine 193, and aspartate 289.

Belongs to the CheB family. Post-translationally, phosphorylated by CheA. Phosphorylation of the N-terminal regulatory domain activates the methylesterase activity.

Its subcellular location is the cytoplasm. The catalysed reaction is [protein]-L-glutamate 5-O-methyl ester + H2O = L-glutamyl-[protein] + methanol + H(+). It catalyses the reaction L-glutaminyl-[protein] + H2O = L-glutamyl-[protein] + NH4(+). Functionally, involved in chemotaxis. Part of a chemotaxis signal transduction system that modulates chemotaxis in response to various stimuli. Catalyzes the demethylation of specific methylglutamate residues introduced into the chemoreceptors (methyl-accepting chemotaxis proteins or MCP) by CheR. Also mediates the irreversible deamidation of specific glutamine residues to glutamic acid. In Thermotoga maritima (strain ATCC 43589 / DSM 3109 / JCM 10099 / NBRC 100826 / MSB8), this protein is Protein-glutamate methylesterase/protein-glutamine glutaminase.